The following is a 291-amino-acid chain: Homoserine kinase (291 aa).

An ATP-binding site is contributed by Arg-80 to Ala-90.

It belongs to the GHMP kinase family. Homoserine kinase subfamily.

It is found in the cytoplasm. The catalysed reaction is L-homoserine + ATP = O-phospho-L-homoserine + ADP + H(+). It participates in amino-acid biosynthesis; L-threonine biosynthesis; L-threonine from L-aspartate: step 4/5. Catalyzes the ATP-dependent phosphorylation of L-homoserine to L-homoserine phosphate. The protein is Homoserine kinase of Natronomonas pharaonis (strain ATCC 35678 / DSM 2160 / CIP 103997 / JCM 8858 / NBRC 14720 / NCIMB 2260 / Gabara) (Halobacterium pharaonis).